We begin with the raw amino-acid sequence, 69 residues long: Conotoxin Cal12.1p4 (69 aa).

A propeptide spanning residues 1–23 is cleaved from the precursor; it reads DLITNSYTRGKPRHVTSWRNLKT.

In terms of processing, contains 4 disulfide bonds. Expressed by the venom duct.

The protein resides in the secreted. The protein is Conotoxin Cal12.1p4 of Californiconus californicus (California cone).